A 132-amino-acid polypeptide reads, in one-letter code: NADPH-dependent 7-cyano-7-deazaguanine reductase (132 aa).

The active-site Thioimide intermediate is the Cys-43. Asp-50 (proton donor) is an active-site residue. Substrate-binding positions include Val-65–Leu-67 and His-84–Glu-85.

It belongs to the GTP cyclohydrolase I family. QueF type 1 subfamily.

It is found in the cytoplasm. It carries out the reaction 7-aminomethyl-7-carbaguanine + 2 NADP(+) = 7-cyano-7-deazaguanine + 2 NADPH + 3 H(+). Its pathway is tRNA modification; tRNA-queuosine biosynthesis. Catalyzes the NADPH-dependent reduction of 7-cyano-7-deazaguanine (preQ0) to 7-aminomethyl-7-deazaguanine (preQ1). The chain is NADPH-dependent 7-cyano-7-deazaguanine reductase from Thermosynechococcus vestitus (strain NIES-2133 / IAM M-273 / BP-1).